The chain runs to 219 residues: Ribose-5-phosphate isomerase A (219 aa).

Residues 28 to 31, 81 to 84, and 94 to 97 contribute to the substrate site; these read TGST, DGAD, and KGGG. Glu-103 serves as the catalytic Proton acceptor. Substrate is bound at residue Lys-121.

Belongs to the ribose 5-phosphate isomerase family. In terms of assembly, homodimer.

It carries out the reaction aldehydo-D-ribose 5-phosphate = D-ribulose 5-phosphate. Its pathway is carbohydrate degradation; pentose phosphate pathway; D-ribose 5-phosphate from D-ribulose 5-phosphate (non-oxidative stage): step 1/1. In terms of biological role, catalyzes the reversible conversion of ribose-5-phosphate to ribulose 5-phosphate. The chain is Ribose-5-phosphate isomerase A from Salmonella arizonae (strain ATCC BAA-731 / CDC346-86 / RSK2980).